We begin with the raw amino-acid sequence, 364 residues long: MSLQSIKYSRGSLEILDQLLLPGQSKYVVVRGVEDGWKVINKMQVRGAPAIAIVGCLSLAVEINPEDFENKKSLRQEIEGKLNYLVSARPTAVNMKIAADELITLANELYKDEAIDVTQMKHRFLDATEAMLKKDIADNRAIGANGAQAILQGVAKAGKAPAGSTGSVRVLTHCNTGSLATAGYGTALGVVRQLAELGKLEHVYCTETRPYNQGARLTAYELVHEKFPATLVLDSMVAALLRAKNVAAVVVGADRVASNGDTANKIGTYQIAVVAKHHDVPFYVAAPLTSIDLAIPGGDHIIIEERPDREMTHVGEHRIAAPGINCWNPAFDVTPASLITGIITERGVFKPAELKEAITKLLES.

Aspartate 254 (proton donor) is an active-site residue.

This sequence belongs to the eIF-2B alpha/beta/delta subunits family. MtnA subfamily.

Its subcellular location is the cytoplasm. The protein resides in the nucleus. It catalyses the reaction 5-(methylsulfanyl)-alpha-D-ribose 1-phosphate = 5-(methylsulfanyl)-D-ribulose 1-phosphate. It functions in the pathway amino-acid biosynthesis; L-methionine biosynthesis via salvage pathway; L-methionine from S-methyl-5-thio-alpha-D-ribose 1-phosphate: step 1/6. Catalyzes the interconversion of methylthioribose-1-phosphate (MTR-1-P) into methylthioribulose-1-phosphate (MTRu-1-P). This chain is Methylthioribose-1-phosphate isomerase, found in Drosophila melanogaster (Fruit fly).